Reading from the N-terminus, the 93-residue chain is Putative pterin-4-alpha-carbinolamine dehydratase (93 aa).

The protein belongs to the pterin-4-alpha-carbinolamine dehydratase family.

The catalysed reaction is (4aS,6R)-4a-hydroxy-L-erythro-5,6,7,8-tetrahydrobiopterin = (6R)-L-erythro-6,7-dihydrobiopterin + H2O. This Roseiflexus castenholzii (strain DSM 13941 / HLO8) protein is Putative pterin-4-alpha-carbinolamine dehydratase.